The primary structure comprises 317 residues: Protein phosphatase 1 regulatory subunit 3C-B (317 aa).

Residues R150–V258 form the CBM21 domain.

As to quaternary structure, interacts with PPP1CC catalytic subunit of PP1 and associates with glycogen. Forms complexes with glycogen phosphorylase, glycogen synthase and phosphorylase kinase which is necessary for its regulation of PP1 activity.

In terms of biological role, acts as a glycogen-targeting subunit for PP1 and regulates its activity. Activates glycogen synthase, reduces glycogen phosphorylase activity and limits glycogen breakdown. This is Protein phosphatase 1 regulatory subunit 3C-B (ppp1r3cb) from Danio rerio (Zebrafish).